Consider the following 1201-residue polypeptide: MLDVNNFEYMKIGLASPDKIRSWSHGEVKKPETINYRTLKPERDGLFCERIFGPMKDWECSCGKYKRVRYKGVVCDRCGVEVTKSKVRRERMGHIELAAPVSHIWYFKGIPSRMGLVMDMSPRALEEIIYFASYVVTEPGDTPLEKKQLLSEREYRVYREKYGKGFSAGMGAEAIKKILADIDLEKETNDLKEELKSAQGQRRTRAIRRLEVMEAFRNSGNNPSWMVLDVLPVIPPEIRPMVQLEGGRFATSDLNDLYRRVINRNNRLKRLLDLGAPNIIVQNEKRMLQEAVDALIDNGRRGRPVTGPGNRPLKSLSHMLKGKQGRFRQNLLGKRVDYSGRSVIVVGPNLKMYQCGLPKEMALELFKPFVMKELVGRGLAHNIKSAKRKIERMAPEIWDVLEEVIREHPVLLNRAPTLHRLGIQAFEPTLVEGRAIRLHPLVCTAYNADFDGDQMAVHVPLSAEAQAEARILMLAAQNILNPKDGKPVVTPSQDMVLGNYYLTLERENAVGEGTIFKDINEAQLAYQNGYVHLHSRIAVFAGSIPNERFTDEQRKQLLITTVGKLIFNTILPKSFPYINEPTKFNLEIETPAKYFVDTTTDVRAHIAAQELIDPFKKKILGNIIAEVFKKFHITETSKMLDRMKDLGFKISTKAGMTVGIADILTLEEKHEILEKAHDTVEKITKSFRRGLITDDERYERVIGVWNAAKDEIQGKLILSLDRLNPIFMMQDSGARGNISNFTQLAGMRGLMADPSGRIVELPITSNFREGLTVLEYFISTHGARKGLTDTALKTADSGYLTRRLVDVAQDVIIREDDCGTDRGLTIKAIREGTEIIEPLEERLEGRYSRKTIRHPETKEVIARENDLITEAIATQIVDAGIEEVTIRSAFTCNTKHGVCKKCYGKNLATGTEVEVGEAVGIIAAQSIGEPGTQLTMRTFHTGGVAGDDITQGLPRIQEIFEARNPKGQAIITEVGGEVVSIEEGRDRQQEITIQGTDDRRSYNIPYTARLRVEEGSIVERGEALTEGSVDPKALIRVRDVLSVQEYLLAEVQKVYRMQGVEIGDKHVEVMVRQMLRKIRVMDTGDTNILPGTLMDIHTFTEANRDAILSGSQPATGRPVLLGITKASLETDSFLSAASFQETTRVLTDAAIKGKRDELLGLKENVILGKLVPAGTGIGRYRKLKSEVIKETAEVTDEITNI.

The Zn(2+) site is built by cysteine 60, cysteine 62, cysteine 75, and cysteine 78. Positions 449, 451, and 453 each coordinate Mg(2+). Zn(2+)-binding residues include cysteine 818, cysteine 892, cysteine 899, and cysteine 902.

Belongs to the RNA polymerase beta' chain family. In terms of assembly, the RNAP catalytic core consists of 2 alpha, 1 beta, 1 beta' and 1 omega subunit. When a sigma factor is associated with the core the holoenzyme is formed, which can initiate transcription. It depends on Mg(2+) as a cofactor. The cofactor is Zn(2+).

It carries out the reaction RNA(n) + a ribonucleoside 5'-triphosphate = RNA(n+1) + diphosphate. Its function is as follows. DNA-dependent RNA polymerase catalyzes the transcription of DNA into RNA using the four ribonucleoside triphosphates as substrates. The sequence is that of DNA-directed RNA polymerase subunit beta' from Listeria innocua serovar 6a (strain ATCC BAA-680 / CLIP 11262).